The following is a 217-amino-acid chain: Small ribosomal subunit protein uS3 (217 aa).

A KH type-2 domain is found at 38 to 106 (IRKFINKELA…QVHINIIEIK (69 aa)).

This sequence belongs to the universal ribosomal protein uS3 family. Part of the 30S ribosomal subunit. Forms a tight complex with proteins S10 and S14.

Binds the lower part of the 30S subunit head. Binds mRNA in the 70S ribosome, positioning it for translation. This is Small ribosomal subunit protein uS3 from Streptococcus pyogenes serotype M6 (strain ATCC BAA-946 / MGAS10394).